A 336-amino-acid chain; its full sequence is ATP-dependent 6-phosphofructokinase (336 aa).

Gly11 is a binding site for ATP. An ADP-binding site is contributed by 21–25; it reads RAVVR. Residues 72 to 73 and 102 to 105 contribute to the ATP site; these read RY and GDGS. Asp103 lines the Mg(2+) pocket. 125–127 serves as a coordination point for substrate; that stretch reads TID. The active-site Proton acceptor is Asp127. Arg154 contacts ADP. Residues Arg162 and 169 to 171 contribute to the substrate site; that span reads MGR. Residues 185–187, Lys211, and 213–215 each bind ADP; these read GAD and KKH. Substrate is bound by residues Glu222, Arg244, and 250 to 253; that span reads HIQR.

Belongs to the phosphofructokinase type A (PFKA) family. ATP-dependent PFK group I subfamily. Prokaryotic clade 'B1' sub-subfamily. In terms of assembly, homotetramer. Mg(2+) serves as cofactor.

The protein localises to the cytoplasm. It catalyses the reaction beta-D-fructose 6-phosphate + ATP = beta-D-fructose 1,6-bisphosphate + ADP + H(+). It participates in carbohydrate degradation; glycolysis; D-glyceraldehyde 3-phosphate and glycerone phosphate from D-glucose: step 3/4. Allosterically activated by ADP and other diphosphonucleosides, and allosterically inhibited by phosphoenolpyruvate. Functionally, catalyzes the phosphorylation of D-fructose 6-phosphate to fructose 1,6-bisphosphate by ATP, the first committing step of glycolysis. This chain is ATP-dependent 6-phosphofructokinase, found in Streptococcus suis (strain 05ZYH33).